The chain runs to 486 residues: Glutamate--tRNA ligase 2 (486 aa).

The short motif at 12-22 (PSPTGELHIGN) is the 'HIGH' region element. The short motif at 252–256 (KLSKR) is the 'KMSKS' region element. Lys255 is an ATP binding site.

It belongs to the class-I aminoacyl-tRNA synthetase family. Glutamate--tRNA ligase type 1 subfamily. Monomer.

It localises to the cytoplasm. The enzyme catalyses tRNA(Glu) + L-glutamate + ATP = L-glutamyl-tRNA(Glu) + AMP + diphosphate. Its function is as follows. Catalyzes the attachment of glutamate to tRNA(Glu) in a two-step reaction: glutamate is first activated by ATP to form Glu-AMP and then transferred to the acceptor end of tRNA(Glu). The chain is Glutamate--tRNA ligase 2 from Syntrophus aciditrophicus (strain SB).